The primary structure comprises 150 residues: Ubiquitin-conjugating enzyme E2 3 (150 aa).

The region spanning 4 to 150 is the UBC core domain; it reads PAKKRLMWDF…VIEIVEQSYV (147 aa). The Glycyl thioester intermediate role is filled by cysteine 88.

The protein belongs to the ubiquitin-conjugating enzyme family. In terms of tissue distribution, expressed in all tissues examined. Lower levels found in leaves.

It carries out the reaction S-ubiquitinyl-[E1 ubiquitin-activating enzyme]-L-cysteine + [E2 ubiquitin-conjugating enzyme]-L-cysteine = [E1 ubiquitin-activating enzyme]-L-cysteine + S-ubiquitinyl-[E2 ubiquitin-conjugating enzyme]-L-cysteine.. It functions in the pathway protein modification; protein ubiquitination. Its function is as follows. Accepts the ubiquitin from the E1 complex and catalyzes its covalent attachment to other proteins. This Arabidopsis thaliana (Mouse-ear cress) protein is Ubiquitin-conjugating enzyme E2 3 (UBC3).